A 283-amino-acid polypeptide reads, in one-letter code: Non-selective voltage-gated ion channel VDAC3 (283 aa).

The residue at position 2 (Cys2) is an N-acetylcysteine. Thr4 carries the post-translational modification Phosphothreonine. An N6-acetyllysine mark is found at Lys12, Lys15, and Lys20. Beta stranded transmembrane passes span 26–35 (MVKIDLRTKS) and 39–47 (VEFSTSGHA). Lys53 is covalently cross-linked (Glycyl lysine isopeptide (Lys-Gly) (interchain with G-Cter in ubiquitin)). A run of 3 beta stranded transmembrane segments spans residues 54–64 (ASGNLETKYKI), 69–76 (LTFTQKWN), and 80–89 (TLGTEISWEN). Lys90 carries the N6-acetyllysine modification. The chain crosses the membrane as a beta stranded span at residues 95–104 (LKLTLDTIFV). Residues Lys109 and Lys110 each participate in a glycyl lysine isopeptide (Lys-Gly) (interchain with G-Cter in ubiquitin) cross-link. The next 10 membrane-spanning stretches (beta stranded) occupy residues 111-120 (SGKLKASYKR), 123-130 (FSLGSNVD), 137-145 (TIYGWAVLA), 150-158 (LAGYQMSFD), 163-175 (KLSQ…GYKA), 178-185 (FQLHTHVN), 189-198 (EFGGSIYQKV), 202-211 (IETSINLAWT), 218-227 (RFGIAAKYKL), and 231-238 (TSLSAKVN). Residue Ser241 is modified to Phosphoserine. NAD(+)-binding positions include 242 to 244 (LIG) and 260 to 264 (SALID). The next 2 membrane-spanning stretches (beta stranded) occupy residues 242–251 (LIGLGYTQTL) and 254–263 (GVKLTLSALI). Position 266 is an N6-acetyllysine; alternate (Lys266). Residue Lys266 forms a Glycyl lysine isopeptide (Lys-Gly) (interchain with G-Cter in ubiquitin); alternate linkage. A beta stranded transmembrane segment spans residues 273–282 (HKVGLGFELE).

This sequence belongs to the eukaryotic mitochondrial porin family. As to quaternary structure, interacts with ARMC12 in a TBC1D21-dependent manner. Interacts with MISFA. Post-translationally, ubiquitinated by PRKN during mitophagy, leading to its degradation and enhancement of mitophagy. Deubiquitinated by USP30.

The protein localises to the mitochondrion outer membrane. Its subcellular location is the membrane. The catalysed reaction is chloride(in) = chloride(out). It carries out the reaction K(+)(in) = K(+)(out). Its function is as follows. Non-selective voltage-gated ion channel that mediates the transport of anions and cations through the mitochondrion outer membrane and plasma membrane. Forms a high-conducting channel with a stable open state and a voltage-induced closure with a mild preference for anions over cations. Involved in male fertility and sperm mitochondrial sheath formation. In Bos taurus (Bovine), this protein is Non-selective voltage-gated ion channel VDAC3.